The following is a 114-amino-acid chain: UPF0757 protein YmgG (114 aa).

Belongs to the UPF0757 family.

The polypeptide is UPF0757 protein YmgG (Edwardsiella ictaluri (strain 93-146)).